We begin with the raw amino-acid sequence, 325 residues long: NADH-quinone oxidoreductase subunit H (325 aa).

The next 8 helical transmembrane spans lie at 11-31 (ILISVLKAVVILLVVVTCGAF), 81-101 (AIFTLAPVIAFTSLLLSFAIV), 114-134 (IGILFFLMMAGLAVYAVLFAG), 154-174 (LSYEVFLGLSLMGVVAQAGSF), 186-206 (VWNVIPQFFGFVTFAIAGVAV), 237-257 (FFVGEYIGIVTVSALIVTLFF), 265-285 (LPPFIWFALKTAFFMVMFILI), and 304-324 (VCLPLTLLNLLATAAVILYNA).

It belongs to the complex I subunit 1 family. NDH-1 is composed of 13 different subunits. Subunits NuoA, H, J, K, L, M, N constitute the membrane sector of the complex.

It is found in the cell inner membrane. It catalyses the reaction a quinone + NADH + 5 H(+)(in) = a quinol + NAD(+) + 4 H(+)(out). Functionally, NDH-1 shuttles electrons from NADH, via FMN and iron-sulfur (Fe-S) centers, to quinones in the respiratory chain. The immediate electron acceptor for the enzyme in this species is believed to be ubiquinone. Couples the redox reaction to proton translocation (for every two electrons transferred, four hydrogen ions are translocated across the cytoplasmic membrane), and thus conserves the redox energy in a proton gradient. This subunit may bind ubiquinone. The protein is NADH-quinone oxidoreductase subunit H of Yersinia enterocolitica serotype O:8 / biotype 1B (strain NCTC 13174 / 8081).